The following is a 377-amino-acid chain: Queuine tRNA-ribosyltransferase (377 aa).

D89 (proton acceptor) is an active-site residue. Residues 89-93 (DSGGF), D143, Q188, and G215 contribute to the substrate site. The tract at residues 246-252 (GVGKPED) is RNA binding. D265 functions as the Nucleophile in the catalytic mechanism. The interval 270–274 (TRNAR) is RNA binding; important for wobble base 34 recognition. Residues C303, C305, C308, and H334 each contribute to the Zn(2+) site.

This sequence belongs to the queuine tRNA-ribosyltransferase family. Homodimer. Within each dimer, one monomer is responsible for RNA recognition and catalysis, while the other monomer binds to the replacement base PreQ1. Zn(2+) is required as a cofactor.

The catalysed reaction is 7-aminomethyl-7-carbaguanine + guanosine(34) in tRNA = 7-aminomethyl-7-carbaguanosine(34) in tRNA + guanine. It functions in the pathway tRNA modification; tRNA-queuosine biosynthesis. In terms of biological role, catalyzes the base-exchange of a guanine (G) residue with the queuine precursor 7-aminomethyl-7-deazaguanine (PreQ1) at position 34 (anticodon wobble position) in tRNAs with GU(N) anticodons (tRNA-Asp, -Asn, -His and -Tyr). Catalysis occurs through a double-displacement mechanism. The nucleophile active site attacks the C1' of nucleotide 34 to detach the guanine base from the RNA, forming a covalent enzyme-RNA intermediate. The proton acceptor active site deprotonates the incoming PreQ1, allowing a nucleophilic attack on the C1' of the ribose to form the product. After dissociation, two additional enzymatic reactions on the tRNA convert PreQ1 to queuine (Q), resulting in the hypermodified nucleoside queuosine (7-(((4,5-cis-dihydroxy-2-cyclopenten-1-yl)amino)methyl)-7-deazaguanosine). The polypeptide is Queuine tRNA-ribosyltransferase (Acinetobacter baumannii (strain ACICU)).